Consider the following 383-residue polypeptide: Cobalt-precorrin-5B C(1)-methyltransferase (383 aa).

Belongs to the CbiD family.

The catalysed reaction is Co-precorrin-5B + S-adenosyl-L-methionine = Co-precorrin-6A + S-adenosyl-L-homocysteine. It functions in the pathway cofactor biosynthesis; adenosylcobalamin biosynthesis; cob(II)yrinate a,c-diamide from sirohydrochlorin (anaerobic route): step 6/10. In terms of biological role, catalyzes the methylation of C-1 in cobalt-precorrin-5B to form cobalt-precorrin-6A. This is Cobalt-precorrin-5B C(1)-methyltransferase from Prochlorococcus marinus (strain MIT 9313).